The following is a 325-amino-acid chain: Dimethylallyltranstransferase (325 aa).

Residues Arg54 and His84 each contribute to the isopentenyl diphosphate site. Mg(2+) contacts are provided by Asp91 and Asp95. Residues Asp91 to Asp95 carry the DDXXD motif motif. Arg101 provides a ligand contact to isopentenyl diphosphate. The short motif at Arg217–Ala221 is the DDXXD motif element.

Belongs to the FPP/GGPP synthase family. The cofactor is Mg(2+).

The catalysed reaction is isopentenyl diphosphate + dimethylallyl diphosphate = (2E)-geranyl diphosphate + diphosphate. The protein operates within isoprenoid biosynthesis; geranyl diphosphate biosynthesis; geranyl diphosphate from dimethylallyl diphosphate and isopentenyl diphosphate: step 1/1. Its function is as follows. Catalyzes the addition of isopentenyl diphosphate (IPP) onto dimethylallyl diphosphate (DMAPP) to form geranyl pyrophosphate (GPP). Is probably involved in the biosynthesis of decaprenyl diphosphate, which is required for mycobacterial cell wall synthesis. Could be required for host endothelial-cell invasion and/or intracellular survival. The protein is Dimethylallyltranstransferase of Mycobacterium tuberculosis (strain ATCC 25618 / H37Rv).